A 154-amino-acid chain; its full sequence is Cytochrome c-550 (154 aa).

The signal sequence occupies residues 1–20; that stretch reads MKISIYATLAALSLALPAVA. Gln21 is subject to Pyrrolidone carboxylic acid. Residues Cys35, Cys38, His39, and Met120 each contribute to the heme c site. A propeptide spanning residues 150–154 is cleaved from the precursor; it reads EGAAN.

In terms of processing, binds 1 heme c group covalently per subunit.

In Paracoccus versutus (Thiobacillus versutus), this protein is Cytochrome c-550 (cyc).